We begin with the raw amino-acid sequence, 101 residues long: Urease subunit beta (101 aa).

It belongs to the urease beta subunit family. As to quaternary structure, heterotrimer of UreA (gamma), UreB (beta) and UreC (alpha) subunits. Three heterotrimers associate to form the active enzyme.

The protein localises to the cytoplasm. The catalysed reaction is urea + 2 H2O + H(+) = hydrogencarbonate + 2 NH4(+). It functions in the pathway nitrogen metabolism; urea degradation; CO(2) and NH(3) from urea (urease route): step 1/1. The chain is Urease subunit beta from Verminephrobacter eiseniae (strain EF01-2).